The following is a 254-amino-acid chain: Serine acetyltransferase (254 aa).

Belongs to the transferase hexapeptide repeat family.

It is found in the cytoplasm. It carries out the reaction L-serine + acetyl-CoA = O-acetyl-L-serine + CoA. It participates in amino-acid biosynthesis; L-cysteine biosynthesis; L-cysteine from L-serine: step 1/2. The protein is Serine acetyltransferase (cysE) of Buchnera aphidicola subsp. Baizongia pistaciae (strain Bp).